Here is a 150-residue protein sequence, read N- to C-terminus: Large ribosomal subunit protein bL9 (150 aa).

This sequence belongs to the bacterial ribosomal protein bL9 family.

Functionally, binds to the 23S rRNA. The polypeptide is Large ribosomal subunit protein bL9 (Neisseria meningitidis serogroup C (strain 053442)).